The chain runs to 335 residues: Methionine import ATP-binding protein MetN (335 aa).

Residues 2–241 form the ABC transporter domain; that stretch reads IQFQRLHKSY…PQHPTTRRFV (240 aa). Position 38–45 (38–45) interacts with ATP; the sequence is GHSGAGKS.

This sequence belongs to the ABC transporter superfamily. Methionine importer (TC 3.A.1.24) family. In terms of assembly, the complex is composed of two ATP-binding proteins (MetN), two transmembrane proteins (MetI) and a solute-binding protein (MetQ).

It is found in the cell inner membrane. The catalysed reaction is L-methionine(out) + ATP + H2O = L-methionine(in) + ADP + phosphate + H(+). The enzyme catalyses D-methionine(out) + ATP + H2O = D-methionine(in) + ADP + phosphate + H(+). In terms of biological role, part of the ABC transporter complex MetNIQ involved in methionine import. Responsible for energy coupling to the transport system. The sequence is that of Methionine import ATP-binding protein MetN from Xanthomonas campestris pv. campestris (strain 8004).